The chain runs to 139 residues: Gastrula zinc finger protein XlCGF67.1 (139 aa).

5 consecutive C2H2-type zinc fingers follow at residues 6-28, 33-55, 61-83, 89-111, and 117-139; these read VSCP…KKVH, YSCS…LRTH, YSCS…KRIH, FSCQ…QKIH, and FSCS…SRIH.

This sequence belongs to the krueppel C2H2-type zinc-finger protein family.

It localises to the nucleus. In terms of biological role, may be involved in transcriptional regulation. The polypeptide is Gastrula zinc finger protein XlCGF67.1 (Xenopus laevis (African clawed frog)).